Reading from the N-terminus, the 60-residue chain is Large ribosomal subunit protein bL32 (60 aa).

The protein belongs to the bacterial ribosomal protein bL32 family.

This chain is Large ribosomal subunit protein bL32, found in Streptococcus suis (strain 05ZYH33).